We begin with the raw amino-acid sequence, 282 residues long: Protease HtpX homolog (282 aa).

The next 2 membrane-spanning stretches (helical) occupy residues 6-26 (TLVL…LIGG) and 29-49 (GATF…FFSH). A Zn(2+)-binding site is contributed by His130. The active site involves Glu131. His134 provides a ligand contact to Zn(2+). A run of 2 helical transmembrane segments spans residues 140–160 (ILIS…AQMA) and 180–200 (IVAL…QLAI). Glu205 is a Zn(2+) binding site.

The protein belongs to the peptidase M48B family. Requires Zn(2+) as cofactor.

The protein resides in the cell inner membrane. This is Protease HtpX homolog from Thermodesulfovibrio yellowstonii (strain ATCC 51303 / DSM 11347 / YP87).